The chain runs to 107 residues: Pathogenesis-related protein PR-4 (107 aa).

Residues 1-107 (QNINWDLRTA…VNYDFVDCGD (107 aa)) enclose the Barwin domain. Cystine bridges form between Cys14/Cys46, Cys35/Cys69, and Cys49/Cys105.

In terms of tissue distribution, preferentially expressed in the tissue surrounding the abscission zone of fruitlets.

It is found in the secreted. The protein localises to the cell wall. In terms of biological role, may be involved in protecting plant tissues from pathogen infection. The chain is Pathogenesis-related protein PR-4 from Prunus persica (Peach).